Here is a 254-residue protein sequence, read N- to C-terminus: MDRSGYFPVLDEDIPTKSELRLPLESKTSSRSRRWLHLVLVLQSVLIISLLASLHILGNRQPSNITCAKQLSPYSPYLEDGDLELEEFTELNHLMQPSPYRGQPTPEIEEAWVRLWRDYAHVSTRYGDDMLGFLNVFHQLHCLNLVRQYTYRDDYDYSNVTAFRAPQELVRGHIDHCIETIRKSIMCASDVTPVVFQLDDSRKSGFKSDFNMRRTCRNFDKIQDWAVANAVQGDFEKNMASSCTLSTPREKEKT.

The chain crosses the membrane as a helical span at residues 38–58 (LVLVLQSVLIISLLASLHILG). N-linked (GlcNAc...) asparagine glycosylation occurs at Asn-64. The HXXHC 1 motif lies at 138–142 (HQLHC). Residue Asn-159 is glycosylated (N-linked (GlcNAc...) asparagine). An HXXHC 2 motif is present at residues 173–177 (HIDHC).

Belongs to the ustYa family.

The protein localises to the membrane. It functions in the pathway mycotoxin biosynthesis. In terms of biological role, ustYa family oxidase; part of the gene cluster that mediates the biosynthesis of the phomopsins, a group of hexapeptide mycotoxins which infects lupins and causes lupinosis disease in livestock. Within the pathway, phomYc' catalyzes the desaturation of the Ile moiety into 2,3-dehydroisoleucine (dIle). The pathway starts with the processing of the precursor phomA' by several endopeptidases including kexin proteases as well as the cluster-specific S41 family peptidase phomP1 and the oligopeptidase phomG' to produce 10 identical copies of the hexapeptide Tyr-Val-Ile-Pro-Ile-Asp. After being excised from the precursor peptide, the core peptides are cyclized and modified post-translationally by enzymes encoded within the gene cluster. The timing and order of proteolysis of the phomA' precursor and PTMs are still unknown. Two tyrosinase-like enzymes, phomQ1' and phomQ2, catalyze the chlorination and hydroxylation of Tyr, respectively. PhomYb, is proposed to be involved in the construction of the macrocyclic structure. The other 4 ustYa family proteins may be involved in PTMs that generate the unique structure of phomopsin A. PhomYa' is required for the hydroxylation of C-beta of Tyr. PhomYc', phomYd', and phomYe are responsible for the biosynthesis of 2,3-dehydroisoleucine (dIle), 2,3-dehydroaspartic acid (dAsp), and 3,4-dehydroproline (dPro), respectively. While dIle formation by phomYc' is indispensable for the installation of dAsp by phomYd', the order of the other PTMs have not been elucidated yet. Most of the biosynthetic enzymes likely have broad substrate specificity, and thus, there might be a metabolic grid from a precursor to phomopsin A. The enzyme(s) responsible for the biosynthesis of 3,4-dehydrovaline (dVal) have also not been identified yet. Finally, phomM' acts as an S-adenosylmethionine-dependent alpha-N-methyltransferase that catalyzes two successive N-methylation reactions, converting N-desmethyl-phomopsin A to phomopsin A and phomopsin A further to an N,N-dimethylated congener called phomopsin E. This is UstYa family oxidase phomYc' from Diaporthe leptostromiformis (Lupinosis disease fungus).